The sequence spans 434 residues: Gamma-glutamyl phosphate reductase (434 aa).

The protein belongs to the gamma-glutamyl phosphate reductase family.

It is found in the cytoplasm. It catalyses the reaction L-glutamate 5-semialdehyde + phosphate + NADP(+) = L-glutamyl 5-phosphate + NADPH + H(+). The protein operates within amino-acid biosynthesis; L-proline biosynthesis; L-glutamate 5-semialdehyde from L-glutamate: step 2/2. Its function is as follows. Catalyzes the NADPH-dependent reduction of L-glutamate 5-phosphate into L-glutamate 5-semialdehyde and phosphate. The product spontaneously undergoes cyclization to form 1-pyrroline-5-carboxylate. This chain is Gamma-glutamyl phosphate reductase, found in Trichormus variabilis (strain ATCC 29413 / PCC 7937) (Anabaena variabilis).